Reading from the N-terminus, the 446-residue chain is Argininosuccinate synthase (446 aa).

ATP is bound by residues 17–25 (AFSGGLDTS) and alanine 43. Tyrosine 99 contributes to the L-citrulline binding site. ATP is bound by residues glycine 129 and threonine 131. Positions 131, 135, and 136 each coordinate L-aspartate. Asparagine 135 provides a ligand contact to L-citrulline. An ATP-binding site is contributed by aspartate 136. The L-citrulline site is built by arginine 139 and serine 192. Aspartate 194 serves as a coordination point for ATP. Positions 201, 203, and 280 each coordinate L-citrulline.

This sequence belongs to the argininosuccinate synthase family. Type 2 subfamily. In terms of assembly, homotetramer.

Its subcellular location is the cytoplasm. It catalyses the reaction L-citrulline + L-aspartate + ATP = 2-(N(omega)-L-arginino)succinate + AMP + diphosphate + H(+). It functions in the pathway amino-acid biosynthesis; L-arginine biosynthesis; L-arginine from L-ornithine and carbamoyl phosphate: step 2/3. The protein is Argininosuccinate synthase of Polaromonas sp. (strain JS666 / ATCC BAA-500).